The following is a 238-amino-acid chain: Cysteine-rich venom protein kaouthin-2 (238 aa).

Positions 1–19 (MIAFIVLLSLAAVLQQSSG) are cleaved as a signal peptide. Residues 20–25 (TVDFAS) constitute a propeptide that is removed on maturation. One can recognise an SCP domain in the interval 38–164 (VDKHNALRRS…SSKYLYVCQY (127 aa)). 8 cysteine pairs are disulfide-bonded: C75-C153, C92-C165, C148-C162, C184-C191, C187-C196, C200-C233, C209-C227, and C218-C231. Positions 200–233 (CKHHNVFSNCQSLAKQNACQTEWMKSKCAASCFC) constitute a ShKT domain.

In terms of tissue distribution, expressed by the venom gland.

It is found in the secreted. This chain is Cysteine-rich venom protein kaouthin-2, found in Naja kaouthia (Monocled cobra).